Reading from the N-terminus, the 241-residue chain is Adenosylcobinamide-GDP ribazoletransferase (241 aa).

The next 5 membrane-spanning stretches (helical) occupy residues 24–44, 48–68, 103–123, 175–195, and 218–238; these read IVFF…SIFY, FINQ…IYGF, VVTF…FNSI, VIIL…FSLI, and IIGF…LISF.

It belongs to the CobS family. It depends on Mg(2+) as a cofactor.

The protein resides in the cell membrane. The enzyme catalyses alpha-ribazole + adenosylcob(III)inamide-GDP = adenosylcob(III)alamin + GMP + H(+). The catalysed reaction is alpha-ribazole 5'-phosphate + adenosylcob(III)inamide-GDP = adenosylcob(III)alamin 5'-phosphate + GMP + H(+). It functions in the pathway cofactor biosynthesis; adenosylcobalamin biosynthesis; adenosylcobalamin from cob(II)yrinate a,c-diamide: step 7/7. In terms of biological role, joins adenosylcobinamide-GDP and alpha-ribazole to generate adenosylcobalamin (Ado-cobalamin). Also synthesizes adenosylcobalamin 5'-phosphate from adenosylcobinamide-GDP and alpha-ribazole 5'-phosphate. This is Adenosylcobinamide-GDP ribazoletransferase from Picrophilus torridus (strain ATCC 700027 / DSM 9790 / JCM 10055 / NBRC 100828 / KAW 2/3).